The chain runs to 65 residues: Large ribosomal subunit protein bL33c (65 aa).

The protein belongs to the bacterial ribosomal protein bL33 family.

The protein resides in the plastid. The protein localises to the chloroplast. The sequence is that of Large ribosomal subunit protein bL33c from Staurastrum punctulatum (Green alga).